The chain runs to 189 residues: Interferon alpha-7 (189 aa).

The signal sequence occupies residues 1 to 23 (MARSFSLLMVVLVLSYKSICSLG). 2 disulfide bridges follow: Cys24-Cys122 and Cys52-Cys162.

This sequence belongs to the alpha/beta interferon family.

It is found in the secreted. Functionally, produced by macrophages, IFN-alpha have antiviral activities. Interferon stimulates the production of two enzymes: a protein kinase and an oligoadenylate synthetase. The chain is Interferon alpha-7 (IFNA7) from Homo sapiens (Human).